The sequence spans 47 residues: Delta-halcutoxin-Hcg1a (47 aa).

Disulfide bonds link cysteine 3-cysteine 43, cysteine 5-cysteine 33, and cysteine 26-cysteine 44.

Belongs to the sea anemone sodium channel inhibitory toxin family. Type II subfamily.

It is found in the secreted. The protein resides in the nematocyst. Is potently lethal to crabs, although it showed neither lethal activity in mice nor hemolytic activity. May bind to voltage-gated sodium channels (Nav), thereby delaying their inactivation during signal transduction. The protein is Delta-halcutoxin-Hcg1a of Isohalcurias carlgreni (Sea anemone).